We begin with the raw amino-acid sequence, 63 residues long: UPF0337 protein PSPTO_1596 (63 aa).

Positions lysine 20–valine 63 are disordered. Residues glycine 50–valine 63 are compositionally biased toward basic and acidic residues.

The protein belongs to the UPF0337 (CsbD) family.

The protein is UPF0337 protein PSPTO_1596 of Pseudomonas syringae pv. tomato (strain ATCC BAA-871 / DC3000).